The following is a 625-amino-acid chain: Inactive glucose-6-phosphate 1-dehydrogenase 4, chloroplastic (625 aa).

A chloroplast-targeting transit peptide spans 1 to 49; that stretch reads MSLSSCLLPFSQSATAPSSSVCSCHLAASFSNFPVSSRDYSFSRSGSLV. NADP(+) is bound by residues 160–167 and arginine 194; that span reads GATGELAR. Cysteines 212 and 220 form a disulfide. Residue lysine 297 coordinates NADP(+). D-glucose 6-phosphate-binding positions include lysine 297, 327-331, glutamate 365, and aspartate 382; that span reads HMLGR. Histidine 387 acts as the Proton acceptor in catalysis. Positions 471, 480, 513, and 606 each coordinate NADP(+).

The protein belongs to the glucose-6-phosphate dehydrogenase family. As to quaternary structure, forms homodimer. Interacts with G6PD1. In terms of tissue distribution, expressed in leaves, stems and buds.

Its subcellular location is the plastid. The protein resides in the chloroplast stroma. Seems to be a catalytically inactive enzyme. This is Inactive glucose-6-phosphate 1-dehydrogenase 4, chloroplastic from Arabidopsis thaliana (Mouse-ear cress).